Here is a 149-residue protein sequence, read N- to C-terminus: Calmodulin-2 (149 aa).

At Ala-2 the chain carries N-acetylalanine. 4 consecutive EF-hand domains span residues 8–43 (EQIA…LGQN), 44–79 (PTEG…KMKD), 81–116 (DSEE…PGEK), and 117–149 (LTDE…MTSK). Residues Asp-21, Asp-23, Asn-25, Asn-27, Glu-32, Asp-57, Asp-59, Asn-61, Thr-63, Glu-68, Asp-94, Asp-96, Asn-98, and Glu-105 each contribute to the Ca(2+) site. Residue Lys-116 is modified to N6,N6,N6-trimethyllysine. 5 residues coordinate Ca(2+): Asp-130, Asp-132, Asp-134, Gln-136, and Glu-141.

Belongs to the calmodulin family.

Functionally, calmodulin mediates the control of a large number of enzymes, ion channels and other proteins by Ca(2+). Among the enzymes to be stimulated by the calmodulin-Ca(2+) complex are a number of protein kinases and phosphatases. This chain is Calmodulin-2 (CAM2), found in Branchiostoma floridae (Florida lancelet).